The primary structure comprises 679 residues: DNA ligase (679 aa).

Residues 32 to 36, 81 to 82, and E115 each bind NAD(+); these read DTLYD and SL. K117 acts as the N6-AMP-lysine intermediate in catalysis. Residues R138, E175, K293, and K317 each contribute to the NAD(+) site. Zn(2+) is bound by residues C411, C414, C429, and C434. The region spanning 601–679 is the BRCT domain; that stretch reads NSSGALLGKT…EAELQKLLST (79 aa).

It belongs to the NAD-dependent DNA ligase family. LigA subfamily. Mg(2+) serves as cofactor. It depends on Mn(2+) as a cofactor.

It catalyses the reaction NAD(+) + (deoxyribonucleotide)n-3'-hydroxyl + 5'-phospho-(deoxyribonucleotide)m = (deoxyribonucleotide)n+m + AMP + beta-nicotinamide D-nucleotide.. DNA ligase that catalyzes the formation of phosphodiester linkages between 5'-phosphoryl and 3'-hydroxyl groups in double-stranded DNA using NAD as a coenzyme and as the energy source for the reaction. It is essential for DNA replication and repair of damaged DNA. The chain is DNA ligase from Parasynechococcus marenigrum (strain WH8102).